Consider the following 628-residue polypeptide: Chaperone protein HtpG (628 aa).

Positions 1–340 (MSTETLQKET…SADLPLNVSR (340 aa)) are a; substrate-binding. The b stretch occupies residues 341–557 (EILQHSKDIE…EHDLSGNLER (217 aa)). Positions 558-628 (LLKAAGQKTP…FVRRVNAMLA (71 aa)) are c.

This sequence belongs to the heat shock protein 90 family. In terms of assembly, homodimer.

The protein resides in the cytoplasm. Molecular chaperone. Has ATPase activity. This chain is Chaperone protein HtpG, found in Methylobacillus flagellatus (strain ATCC 51484 / DSM 6875 / VKM B-1610 / KT).